Reading from the N-terminus, the 209-residue chain is Outer-membrane lipoprotein LolB (209 aa).

Residues 1–21 (MNNMKTFKFLTALFATAILTA) form the signal peptide. The N-palmitoyl cysteine moiety is linked to residue C22. C22 carries S-diacylglycerol cysteine lipidation.

The protein belongs to the LolB family. In terms of assembly, monomer.

Its subcellular location is the cell outer membrane. Functionally, plays a critical role in the incorporation of lipoproteins in the outer membrane after they are released by the LolA protein. This chain is Outer-membrane lipoprotein LolB, found in Haemophilus influenzae (strain 86-028NP).